A 504-amino-acid chain; its full sequence is Arrestin-related trafficking adapter 10 (504 aa).

Belongs to the ART10 family.

The protein localises to the cytoplasm. In terms of biological role, may regulate endocytosis by recruiting RSP5 ubiquitin ligase activity to specific plasma membrane proteins in response to extracellular stimuli. This is Arrestin-related trafficking adapter 10 (ART10) from Candida glabrata (strain ATCC 2001 / BCRC 20586 / JCM 3761 / NBRC 0622 / NRRL Y-65 / CBS 138) (Yeast).